Here is a 1286-residue protein sequence, read N- to C-terminus: X-linked retinitis pigmentosa GTPase regulator-interacting protein 1 (1286 aa).

Residues 144-193 (QVGHRQLHTAGAPVPEKPKRGPRDRLSYTAPPSFKEHATNENRGEVASKP) are disordered. Basic and acidic residues-rich tracts occupy residues 159 to 169 (EKPKRGPRDRL) and 177 to 189 (FKEHATNENRGEV). Residues 294 to 584 (KAQLTEVQEA…LEGILRSHDL (291 aa)) are a coiled coil. The 126-residue stretch at 781 to 906 (GGRKAQEEEF…AKNESIKGDF (126 aa)) folds into the C2 domain. 2 disordered regions span residues 934–1008 (SFLK…RKHG) and 1058–1108 (EEEE…PMSQ). Basic and acidic residues-rich tracts occupy residues 940–960 (AQTKGKDTKDSSKISSEEEKA), 988–998 (HGGERKEKEHQ), and 1070–1084 (KQKEPLHPVNDKESS). Positions 1085 to 1096 (EQGSEVSEAQTT) are enriched in polar residues. An interaction with RPGR region spans residues 1091-1281 (SEAQTTDSDD…VLHAIYKEMT (191 aa)).

Belongs to the RPGRIP1 family. As to quaternary structure, forms homodimers and elongated homopolymers. Interacts with RPGR. Interacts with NPHP4. Interacts with NEK4. Interacts with SPATA7. Interacts with CEP290/NPHP6; mediating the association between RPGR and CEP290/NPHP6. Strong expression in retina, with weaker expression in testis. Expressed in other neurons such as amacrine cells. Colocalizes with RGPR in the outer segment of rod photoreceptors and cone outer segments.

It localises to the cell projection. The protein localises to the cilium. May function as scaffolding protein. Required for normal location of RPGR at the connecting cilium of photoreceptor cells. Required for normal disk morphogenesis and disk organization in the outer segment of photoreceptor cells and for survival of photoreceptor cells. In Homo sapiens (Human), this protein is X-linked retinitis pigmentosa GTPase regulator-interacting protein 1 (RPGRIP1).